Reading from the N-terminus, the 177-residue chain is Phycoerythrin beta subunit (177 aa).

(2R,3E)-phycocyanobilin contacts are provided by tyrosine 18, lysine 28, asparagine 35, and aspartate 39. Positions 50, 54, and 61 each coordinate 15,16-dihydrobiliverdin. The (2R,3E)-phycocyanobilin site is built by arginine 77, cysteine 82, arginine 84, and aspartate 85. Residues arginine 129, glutamine 148, and lysine 149 each contribute to the 15,16-dihydrobiliverdin site. Positions 154, 156, and 158 each coordinate (2R,3E)-phycocyanobilin.

This sequence belongs to the phycobiliprotein family. As to quaternary structure, heterotetramer of 2 identical alpha chains and 2 identical beta chains which form 2 alpha-beta heterodimers within the heterotetramer. The two alpha-beta heterodimers are rotated to an open configuration in contrast to the closed configuration found in other cryptophyte species due to the insertion of a single amino acid, 'Asp-65', in a conserved region of the alpha chain. In the open form, the central chromophores are not in physical contact but are separated by a water-filled channel. Contains three phycocyanobilin chromophores and one 15,16-dihydrobiliverdin chromophore with binding of the phycocyanobilin chromophores mediated by both the alpha and beta subunits.

It is found in the plastid. The protein localises to the chloroplast thylakoid membrane. Functionally, light-harvesting photosynthetic bile pigment-protein from the phycobiliprotein complex. The polypeptide is Phycoerythrin beta subunit (Hemiselmis virescens).